We begin with the raw amino-acid sequence, 246 residues long: uncharacterized protein (246 aa).

The first 24 residues, 1–24 (MGAPLRHCLLVAAALSLGCGVAAA), serve as a signal peptide directing secretion. 2 consecutive transmembrane segments (helical) span residues 71 to 91 (YYLGSISGKKVIVAMTGIGLV) and 104 to 124 (FTCASSIAIAAVMFSGVAGGA).

The protein localises to the cell membrane. This is an uncharacterized protein from Mycobacterium tuberculosis (strain ATCC 25618 / H37Rv).